The following is a 141-amino-acid chain: Ubiquitin-like protein ATG12 (141 aa).

The interval 1 to 53 is disordered; the sequence is MSEDSEVVLQLPSAPVGAGGESLPELSPETATPEPPSSAAVSPGTEEPPGDTK. Positions 23–40 are enriched in low complexity; the sequence is LPELSPETATPEPPSSAA. A Glycyl lysine isopeptide (Gly-Lys) (interchain with K-? in acceptor protein) cross-link involves residue Gly141.

Belongs to the ATG12 family. As to quaternary structure, forms a conjugate with ATG5. Part of the minor complex composed of 4 sets of ATG12-ATG5 and ATG16L1 (400 kDa); this complex interacts with ATG3 leading to disruption of ATG7 interaction and promotion of ATG8-like proteins lipidation. Forms an 800-kDa complex composed of ATG12-ATG5 and ATG16L2. Interacts with DHX58/RIG-1, IFIH1/MDA5 and MAVS/IPS-1 in monomeric form as well as in ATG12-ATG5 conjugate. The interaction with MAVS is further enhanced upon vesicular stomatitis virus (VSV) infection. Interacts with ATG3; this interaction is essential for phosphatidylethanolamine (PE)-conjugated ATG8-like proteins formation. Interacts with ATG7. Interacts with ATG10. The ATG12-ATG5 conjugate interacts with RAB33A; this interaction is bridged by ATG16L1 and promotes ATG12-ATG5-ATG16L1 complex recruitment to phagophores. Interacts with TECPR1. Interacts with SH3BGRL. The ATG12-ATG5 conjugate interacts with PDCD6IP (via the BRO1 domain); this interaction is bridged by ATG12 and promotes multiple PDCD6IP-mediated functions such as endolysosomal trafficking, macroautophagy and exosome biogenesis. Post-translationally, acetylated by EP300. As to expression, ubiquitous.

It localises to the cytoplasm. It is found in the preautophagosomal structure membrane. Functionally, ubiquitin-like protein involved in autophagy vesicles formation. Conjugation with ATG5 through a ubiquitin-like conjugating system involving also ATG7 as an E1-like activating enzyme and ATG10 as an E2-like conjugating enzyme, is essential for its function. The ATG12-ATG5 conjugate acts as an E3-like enzyme which is required for lipidation of ATG8 family proteins and their association to the vesicle membranes. As part of the ATG8 conjugation system with ATG5 and ATG16L1, required for recruitment of LRRK2 to stressed lysosomes and induction of LRRK2 kinase activity in response to lysosomal stress. Its function is as follows. (Microbial infection) May act as a proviral factor. In association with ATG5, negatively regulates the innate antiviral immune response by impairing the type I IFN production pathway upon vesicular stomatitis virus (VSV) infection. The sequence is that of Ubiquitin-like protein ATG12 from Mus musculus (Mouse).